The sequence spans 713 residues: MNIIAIMGPHGVFYKDEPIKELESALVAQGFQIIWPQNSVDLLKFIEHNPRICGVIFDWDEYSLDLCSDINQLNEYLPLYAFINTHSTMDVSVQDMRMALWFFEYALGQAEDIAIRMRQYTDEYLDNITPPFTKALFTYVKERKYTFCTPGHMGGTAYQKSPVGCLFYDFFGGNTLKADVSISVTELGSLLDHTGPHLEAEEYIARTFGAEQSYIVTNGTSTSNKIVGMYAAPSGSTLLIDRNCHKSLAHLLMMNDVVPVWLKPTRNALGILGGIPRREFTRDSIEEKVAATTQAQWPVHAVITNSTYDGLLYNTDWIKQTLDVPSIHFDSAWVPYTHFHPIYQGKSGMSGERVAGKVIFETQSTHKMLAALSQASLIHIKGEYDEEAFNEAFMMHTTTSPSYPIVASVETAAAMLRGNPGKRLINRSVERALHFRKEVQRLREESDGWFFDIWQPPQVDEAECWPVAPGEQWHGFNDADADHMFLDPVKVTILTPGMDEQGNMSEEGIPAALVAKFLDERGIVVEKTGPYNLLFLFSIGIDKTKAMGLLRGLTEFKRSYDLNLRIKNMLPDLYAEDPDFYRNMRIQDLAQGIHKLIRKHDLPGLMLRAFDTLPEMIMTPHQAWQRQIKGEVETIALEQLVGRVSANMILPYPPGVPLLMPGEMLTKESRTVLDFLLMLCSVGQHYPGFETDIHGAKQDEDGVYRVRVLKMAG.

Residue Lys-367 is modified to N6-(pyridoxal phosphate)lysine.

This sequence belongs to the Orn/Lys/Arg decarboxylase class-I family. Homodecamer; built of five dimers associated in a 5-fold symmetrical double-ring. Pyridoxal 5'-phosphate serves as cofactor.

It catalyses the reaction L-lysine + H(+) = cadaverine + CO2. Its function is as follows. Plays a role in lysine utilization by acting as a lysine decarboxylase. In Escherichia coli (strain K12), this protein is Constitutive lysine decarboxylase (ldcC).